A 195-amino-acid polypeptide reads, in one-letter code: Inosine triphosphate pyrophosphatase (195 aa).

Residue Thr13–Lys18 coordinates ITP. Mg(2+) is bound at residue Glu43. Residues Lys55, Asp71 to Thr72, Lys88, Phe148 to Asp151, Lys171, and His176 to Arg177 each bind ITP.

It belongs to the HAM1 NTPase family. As to quaternary structure, homodimer. It depends on Mg(2+) as a cofactor. The cofactor is Mn(2+).

It is found in the cytoplasm. It catalyses the reaction ITP + H2O = IMP + diphosphate + H(+). The catalysed reaction is dITP + H2O = dIMP + diphosphate + H(+). It carries out the reaction XTP + H2O = XMP + diphosphate + H(+). The enzyme catalyses N(6)-hydroxy-dATP + H2O = N(6)-hydroxy-dAMP + diphosphate + H(+). In terms of biological role, pyrophosphatase that hydrolyzes the non-canonical purine nucleotides inosine triphosphate (ITP), deoxyinosine triphosphate (dITP) as well as 2'-deoxy-N-6-hydroxylaminopurine triphosphate (dHAPTP) and xanthosine 5'-triphosphate (XTP) to their respective monophosphate derivatives. The enzyme does not distinguish between the deoxy- and ribose forms. Probably excludes non-canonical purines from RNA and DNA precursor pools, thus preventing their incorporation into RNA and DNA and avoiding chromosomal lesions. The polypeptide is Inosine triphosphate pyrophosphatase (itpa) (Xenopus laevis (African clawed frog)).